Consider the following 1410-residue polypeptide: DNA-directed RNA polymerase subunit beta' (1410 aa).

Cys-69, Cys-71, Cys-84, and Cys-87 together coordinate Zn(2+). Residues Asp-461, Asp-463, and Asp-465 each contribute to the Mg(2+) site. Zn(2+) is bound by residues Cys-810, Cys-884, Cys-891, and Cys-894.

Belongs to the RNA polymerase beta' chain family. In terms of assembly, the RNAP catalytic core consists of 2 alpha, 1 beta, 1 beta' and 1 omega subunit. When a sigma factor is associated with the core the holoenzyme is formed, which can initiate transcription. It depends on Mg(2+) as a cofactor. The cofactor is Zn(2+).

It catalyses the reaction RNA(n) + a ribonucleoside 5'-triphosphate = RNA(n+1) + diphosphate. DNA-dependent RNA polymerase catalyzes the transcription of DNA into RNA using the four ribonucleoside triphosphates as substrates. The protein is DNA-directed RNA polymerase subunit beta' of Ehrlichia chaffeensis (strain ATCC CRL-10679 / Arkansas).